The following is a 160-amino-acid chain: Nucleotide-binding protein PSHAa2277 (160 aa).

The protein belongs to the YajQ family.

Nucleotide-binding protein. The polypeptide is Nucleotide-binding protein PSHAa2277 (Pseudoalteromonas translucida (strain TAC 125)).